The sequence spans 431 residues: Serine hydroxymethyltransferase (431 aa).

(6S)-5,6,7,8-tetrahydrofolate is bound at residue 121–123; the sequence is AHV. The residue at position 227 (Lys-227) is an N6-(pyridoxal phosphate)lysine.

This sequence belongs to the SHMT family. As to quaternary structure, homodimer. The cofactor is pyridoxal 5'-phosphate.

The protein resides in the cytoplasm. Its pathway is amino-acid biosynthesis; glycine biosynthesis; glycine from L-serine: step 1/1. Catalyzes the reversible interconversion of serine and glycine with a modified folate serving as the one-carbon carrier. Also exhibits a pteridine-independent aldolase activity toward beta-hydroxyamino acids, producing glycine and aldehydes, via a retro-aldol mechanism. The sequence is that of Serine hydroxymethyltransferase from Metallosphaera sedula (strain ATCC 51363 / DSM 5348 / JCM 9185 / NBRC 15509 / TH2).